The following is a 560-amino-acid chain: Glutamate--tRNA ligase (560 aa).

The 'HIGH' region motif lies at 108-118 (PNPSGPLHLGH).

This sequence belongs to the class-I aminoacyl-tRNA synthetase family. Glutamate--tRNA ligase type 2 subfamily.

It localises to the cytoplasm. The catalysed reaction is tRNA(Glu) + L-glutamate + ATP = L-glutamyl-tRNA(Glu) + AMP + diphosphate. Its function is as follows. Catalyzes the attachment of glutamate to tRNA(Glu) in a two-step reaction: glutamate is first activated by ATP to form Glu-AMP and then transferred to the acceptor end of tRNA(Glu). The chain is Glutamate--tRNA ligase from Methanocorpusculum labreanum (strain ATCC 43576 / DSM 4855 / Z).